A 447-amino-acid chain; its full sequence is MENIEELWSATLKKIEEKLSKPSFDTWLKNTKAEALEKDTLIISAPNEFARDWLENQYTNLISQMLLEVTGSELNTKFIIPDSLEEIEEQKPMPKPKQSTDTGDSPKSMLNSKYTFDTFVIGAGNRFAHAASLAVAEAPAKAYNPLFIYGGVGLGKTHLMHAIGHYVRDHNPNAKVVYLTSEKFTNEFINAIMDNKSNHFRNKYRNIDVLLIDDIQFIAGKESTQEEFFHTFNALHGESKQIIISSDRPPKEIPTLEDRLRSRFEWGLITDITPPDLETRIAILNKKAKAEGLDIPNEVMLYIANQINTNIRELEGALIRVVAYSSLVNQDIDASLAADALKDIIPSSKPKEITIPAIQEIVAERYHIRLEDFAAKKRTKSIAFPRQIAMYLSRELTDASLPKIGEEFGGRDHTTVIHAHEKISKMLEQDTELDRDIEELKEKLKSI.

Residues 1–74 (MENIEELWSA…MLLEVTGSEL (74 aa)) are domain I, interacts with DnaA modulators. The segment at 74-108 (LNTKFIIPDSLEEIEEQKPMPKPKQSTDTGDSPKS) is domain II. The disordered stretch occupies residues 85 to 107 (EEIEEQKPMPKPKQSTDTGDSPK). Positions 97–107 (KQSTDTGDSPK) are enriched in polar residues. Residues 109-325 (MLNSKYTFDT…GALIRVVAYS (217 aa)) are domain III, AAA+ region. Positions 153, 155, 156, and 157 each coordinate ATP. Residues 326–447 (SLVNQDIDAS…EELKEKLKSI (122 aa)) form a domain IV, binds dsDNA region.

It belongs to the DnaA family. Oligomerizes as a right-handed, spiral filament on DNA at oriC.

It localises to the cytoplasm. Its function is as follows. Plays an essential role in the initiation and regulation of chromosomal replication. ATP-DnaA binds to the origin of replication (oriC) to initiate formation of the DNA replication initiation complex once per cell cycle. Binds the DnaA box (a 9 base pair repeat at the origin) and separates the double-stranded (ds)DNA. Forms a right-handed helical filament on oriC DNA; dsDNA binds to the exterior of the filament while single-stranded (ss)DNA is stabiized in the filament's interior. The ATP-DnaA-oriC complex binds and stabilizes one strand of the AT-rich DNA unwinding element (DUE), permitting loading of DNA polymerase. After initiation quickly degrades to an ADP-DnaA complex that is not apt for DNA replication. Binds acidic phospholipids. This is Chromosomal replication initiator protein DnaA from Oceanobacillus iheyensis (strain DSM 14371 / CIP 107618 / JCM 11309 / KCTC 3954 / HTE831).